Here is a 346-residue protein sequence, read N- to C-terminus: Peroxidase 19 (346 aa).

The first 31 residues, 1–31 (MHVISLSLSSIFFFLFLTSTILISPVQPTTS), serve as a signal peptide directing secretion. 4 cysteine pairs are disulfide-bonded: Cys51–Cys134, Cys84–Cys89, Cys140–Cys342, and Cys219–Cys251. His82 serves as the catalytic Proton acceptor. Ca(2+) is bound by residues Asp83, Val86, Gly88, Asp90, and Ser92. Pro182 contributes to the substrate binding site. N-linked (GlcNAc...) asparagine glycosylation occurs at Asn185. His212 contributes to the heme b binding site. Thr213 is a binding site for Ca(2+). Residues Asp265, Thr268, and Asp273 each contribute to the Ca(2+) site.

Belongs to the peroxidase family. Classical plant (class III) peroxidase subfamily. Heme b is required as a cofactor. It depends on Ca(2+) as a cofactor.

The protein resides in the secreted. It catalyses the reaction 2 a phenolic donor + H2O2 = 2 a phenolic radical donor + 2 H2O. Functionally, removal of H(2)O(2), oxidation of toxic reductants, biosynthesis and degradation of lignin, suberization, auxin catabolism, response to environmental stresses such as wounding, pathogen attack and oxidative stress. These functions might be dependent on each isozyme/isoform in each plant tissue. The chain is Peroxidase 19 (PER19) from Arabidopsis thaliana (Mouse-ear cress).